The chain runs to 188 residues: Crossover junction endodeoxyribonuclease RuvC (188 aa).

Catalysis depends on residues Asp7, Glu68, and Asp141. Mg(2+) is bound by residues Asp7, Glu68, and Asp141.

It belongs to the RuvC family. Homodimer which binds Holliday junction (HJ) DNA. The HJ becomes 2-fold symmetrical on binding to RuvC with unstacked arms; it has a different conformation from HJ DNA in complex with RuvA. In the full resolvosome a probable DNA-RuvA(4)-RuvB(12)-RuvC(2) complex forms which resolves the HJ. Requires Mg(2+) as cofactor.

The protein localises to the cytoplasm. The enzyme catalyses Endonucleolytic cleavage at a junction such as a reciprocal single-stranded crossover between two homologous DNA duplexes (Holliday junction).. Functionally, the RuvA-RuvB-RuvC complex processes Holliday junction (HJ) DNA during genetic recombination and DNA repair. Endonuclease that resolves HJ intermediates. Cleaves cruciform DNA by making single-stranded nicks across the HJ at symmetrical positions within the homologous arms, yielding a 5'-phosphate and a 3'-hydroxyl group; requires a central core of homology in the junction. The consensus cleavage sequence is 5'-(A/T)TT(C/G)-3'. Cleavage occurs on the 3'-side of the TT dinucleotide at the point of strand exchange. HJ branch migration catalyzed by RuvA-RuvB allows RuvC to scan DNA until it finds its consensus sequence, where it cleaves and resolves the cruciform DNA. The protein is Crossover junction endodeoxyribonuclease RuvC of Mycobacterium tuberculosis (strain ATCC 25177 / H37Ra).